We begin with the raw amino-acid sequence, 200 residues long: Holliday junction branch migration complex subunit RuvA (200 aa).

The tract at residues 1–63 (MIAFVRGQVA…EDSLTLFGFA (63 aa)) is domain I. The segment at 64–142 (DEDEKQTFEL…APTGAGRSAG (79 aa)) is domain II. The segment at 142–146 (GVPAP) is flexible linker. The domain III stretch occupies residues 147-200 (AGAVWRDQVHQGLVGLGWPVRDAEKAVAAVAPEAGDVPDVAALLRAALRTLSKA).

This sequence belongs to the RuvA family. As to quaternary structure, homotetramer. Forms an RuvA(8)-RuvB(12)-Holliday junction (HJ) complex. HJ DNA is sandwiched between 2 RuvA tetramers; dsDNA enters through RuvA and exits via RuvB. An RuvB hexamer assembles on each DNA strand where it exits the tetramer. Each RuvB hexamer is contacted by two RuvA subunits (via domain III) on 2 adjacent RuvB subunits; this complex drives branch migration. In the full resolvosome a probable DNA-RuvA(4)-RuvB(12)-RuvC(2) complex forms which resolves the HJ.

Its subcellular location is the cytoplasm. The RuvA-RuvB-RuvC complex processes Holliday junction (HJ) DNA during genetic recombination and DNA repair, while the RuvA-RuvB complex plays an important role in the rescue of blocked DNA replication forks via replication fork reversal (RFR). RuvA specifically binds to HJ cruciform DNA, conferring on it an open structure. The RuvB hexamer acts as an ATP-dependent pump, pulling dsDNA into and through the RuvAB complex. HJ branch migration allows RuvC to scan DNA until it finds its consensus sequence, where it cleaves and resolves the cruciform DNA. This is Holliday junction branch migration complex subunit RuvA from Nocardioides sp. (strain ATCC BAA-499 / JS614).